A 513-amino-acid chain; its full sequence is Maturase K (513 aa).

Belongs to the intron maturase 2 family. MatK subfamily.

It localises to the plastid. The protein resides in the chloroplast. In terms of biological role, usually encoded in the trnK tRNA gene intron. Probably assists in splicing its own and other chloroplast group II introns. The chain is Maturase K from Cynodon dactylon (Bermuda grass).